A 463-amino-acid chain; its full sequence is Ribosomal protein uS12 methylthiotransferase RimO (463 aa).

One can recognise an MTTase N-terminal domain in the interval 15 to 130; that stretch reads PKVGMVSLGC…VMQVVHSHLP (116 aa). Residues Cys-24, Cys-60, Cys-89, Cys-161, Cys-165, and Cys-168 each coordinate [4Fe-4S] cluster. A Radical SAM core domain is found at 147–392; sequence LTPRHYAYLK…MEVAEEVSAA (246 aa). The 69-residue stretch at 395-463 folds into the TRAM domain; sequence ERKVGKTLKV…ADGHDLWGEV (69 aa).

Belongs to the methylthiotransferase family. RimO subfamily. [4Fe-4S] cluster serves as cofactor.

The protein resides in the cytoplasm. The enzyme catalyses L-aspartate(89)-[ribosomal protein uS12]-hydrogen + (sulfur carrier)-SH + AH2 + 2 S-adenosyl-L-methionine = 3-methylsulfanyl-L-aspartate(89)-[ribosomal protein uS12]-hydrogen + (sulfur carrier)-H + 5'-deoxyadenosine + L-methionine + A + S-adenosyl-L-homocysteine + 2 H(+). Catalyzes the methylthiolation of an aspartic acid residue of ribosomal protein uS12. The chain is Ribosomal protein uS12 methylthiotransferase RimO from Burkholderia thailandensis (strain ATCC 700388 / DSM 13276 / CCUG 48851 / CIP 106301 / E264).